The following is a 291-amino-acid chain: MSLNLRDLEYFYQLSKLRSFTNVAKHFRVSQPTISYAIKRLETYYDCDLFYKDSSHQVVDLTPEGELLAMRTNEILSELNHTKKAIHRSSMKDFKVGFPPIISSYLLSKQDNLNFFNALHMIYGGSNELLSLLLNEEIDSSLLGSLEKIKHPQLEIEELFQKEFFIIMSDSHPLANEKELGFKDLLNEDFILLGEHNIHFNAFNRLNEKYNQSANVVLKLDDAHTIKELVRKNLGISLMADIRLSEDFKNLVKVPFIEEDKQFFHINYAYQKNSILSESEKNFLEILKTLK.

The 60-residue stretch at 1 to 60 folds into the HTH lysR-type domain; the sequence is MSLNLRDLEYFYQLSKLRSFTNVAKHFRVSQPTISYAIKRLETYYDCDLFYKDSSHQVVD. The segment at residues 20 to 39 is a DNA-binding region (H-T-H motif); sequence FTNVAKHFRVSQPTISYAIK.

It belongs to the LysR transcriptional regulatory family.

The protein resides in the cytoplasm. Required for malolactic fermentation. It is most probably a transcriptional activator. This is Malolactic fermentation system transcriptional activator (mleR) from Lactococcus lactis subsp. lactis (strain IL1403) (Streptococcus lactis).